A 349-amino-acid polypeptide reads, in one-letter code: Phosphate acetyltransferase (349 aa).

Belongs to the phosphate acetyltransferase and butyryltransferase family.

It localises to the cytoplasm. The enzyme catalyses acetyl-CoA + phosphate = acetyl phosphate + CoA. It participates in metabolic intermediate biosynthesis; acetyl-CoA biosynthesis; acetyl-CoA from acetate: step 2/2. This is Phosphate acetyltransferase (pta) from Rickettsia felis (strain ATCC VR-1525 / URRWXCal2) (Rickettsia azadi).